A 310-amino-acid chain; its full sequence is Putative dihydroorotate dehydrogenase A (fumarate) (310 aa).

Residues K45, 69-73, and N128 each bind substrate; that span reads NSMGL. Position 45 to 46 (45 to 46) interacts with FMN; the sequence is KT. N128 is an FMN binding site. The active-site Nucleophile is C131. FMN-binding residues include K165 and V193. 194–195 is a binding site for substrate; the sequence is NS. Residues G220, 248–249, and 270–271 contribute to the FMN site; these read GG and GT.

Belongs to the dihydroorotate dehydrogenase family. Type 1 subfamily. As to quaternary structure, homodimer. FMN serves as cofactor.

It is found in the cytoplasm. It carries out the reaction (S)-dihydroorotate + fumarate = orotate + succinate. It participates in pyrimidine metabolism; UMP biosynthesis via de novo pathway. Catalyzes the conversion of dihydroorotate to orotate with fumarate as the electron acceptor. The sequence is that of Putative dihydroorotate dehydrogenase A (fumarate) (pyrD) from Streptococcus agalactiae serotype Ia (strain ATCC 27591 / A909 / CDC SS700).